The following is a 439-amino-acid chain: MLSKLASLQTIAALRRGVHTSVASATSVATKKTEQGPPSSEYIFERESKYGAHNYHPLPVALERGKGIYMWDVEGRQYFDFLSAYGAVSQGHCHPKIIDAMKSQVDKLTLTSRAFYNNVLGEYEEYITKLFNYNKVLPMNTGVEAGETACKLARRWGYTVKGIQKYKAKIVFADGNFWGRTLSAISSSTDPTSYDGFGPFMPGFETIPYNDLPALERALQDPNVAAFMVEPIQGEAGVIVPDPGYLTGVRELCTRHQVLFIADEIQTGLARTGRWLAVDHENVRPDMVLLGKALSGGLYPVSAVLCDDEIMLTIKPGEHGSTYGGNPLGCRIAIAALEVLEEENLAENADKMGAILRKELMKLPSDVVTSVRGKGLLNAIVIRETKDCDAWKVCLRLRDNGLLAKPTHGDIIRLAPPLVIKEDEIRESVEIINKTILSF.

Residues 1–25 (MLSKLASLQTIAALRRGVHTSVASA) constitute a mitochondrion transit peptide. Residues K49 and K66 each carry the N6-acetyllysine modification. K102 is modified (N6-succinyllysine). The residue at position 107 (K107) is an N6-acetyllysine; alternate. K107 carries the N6-succinyllysine; alternate modification. K292 bears the N6-(pyridoxal phosphate)lysine mark. K362 bears the N6-acetyllysine; alternate mark. K362 is modified (N6-succinyllysine; alternate). An N6-acetyllysine mark is found at K386 and K392. K405 carries the post-translational modification N6-acetyllysine; alternate. K405 bears the N6-succinyllysine; alternate mark. Position 421 is an N6-acetyllysine (K421).

This sequence belongs to the class-III pyridoxal-phosphate-dependent aminotransferase family. Homohexamer. The cofactor is pyridoxal 5'-phosphate.

The protein resides in the mitochondrion matrix. The enzyme catalyses L-ornithine + 2-oxoglutarate = L-glutamate 5-semialdehyde + L-glutamate. It participates in amino-acid biosynthesis; L-proline biosynthesis; L-glutamate 5-semialdehyde from L-ornithine: step 1/1. In terms of biological role, catalyzes the reversible interconversion of L-ornithine and 2-oxoglutarate to L-glutamate semialdehyde and L-glutamate. In Mus musculus (Mouse), this protein is Ornithine aminotransferase, mitochondrial (Oat).